The following is a 463-amino-acid chain: Competence protein ComFA (463 aa).

Residues cysteine 60, cysteine 63, cysteine 84, and cysteine 87 each coordinate Zn(2+). A Helicase ATP-binding domain is found at 133-285 (IEAISKKEEL…LNGQLHSVRI (153 aa)). Residue 146–153 (AVCGAGKT) participates in ATP binding. The DEAD box signature appears at 233–236 (DEVD). Residues 317 to 463 (AVKRWIEFHV…ELAAKVECTD (147 aa)) form the Helicase C-terminal domain.

Belongs to the DEAD box helicase family. In terms of assembly, monomer and dimer in solution. Interacts with DprA and ComFC; ComFA-ComFC form rings about 150 Angstroms in diameter with apparent 6-fold symmetry. It depends on Zn(2+) as a cofactor.

Its subcellular location is the cytoplasm. Its function is as follows. Involved in transformation (genetic competence for DNA uptake). Required for DNA uptake but not for DNA binding to cells. DNA uptake is energy dependent, this protein may provide the driving force for DNA uptake. Does not have helicase activity, translocates on single-stranded (ss)DNA in a 5'-3' direction in an ATP-dependent manner, but does not unwind double-stranded (ds)DNA. ATP hydrolysis causes the release of ssDNA from ComFA. A ssDNA-stimulated ATPase; dsDNA does not stimulate ATPase. ATP hydrolysis causes the release of ssDNA from ComFA. Binds ssDNA but only very poorly to dsDNA in the absence of ATP. Binding to ssDNA does not require free DNA ends. This is Competence protein ComFA from Bacillus subtilis (strain 168).